Consider the following 151-residue polypeptide: Sec-independent protein translocase protein TatB (151 aa).

The chain crosses the membrane as a helical span at residues 1–21 (MFGMSLPEIIIIAVIAVIFLG). The segment covering 120–131 (NNDPLNNETLNE) has biased composition (low complexity). Residues 120–151 (NNDPLNNETLNEQPSKPSPNLNLENKEIKKEA) form a disordered region. Over residues 132–142 (QPSKPSPNLNL) the composition is skewed to polar residues.

This sequence belongs to the TatB family. In terms of assembly, the Tat system comprises two distinct complexes: a TatABC complex, containing multiple copies of TatA, TatB and TatC subunits, and a separate TatA complex, containing only TatA subunits. Substrates initially bind to the TatABC complex, which probably triggers association of the separate TatA complex to form the active translocon.

It is found in the cell inner membrane. Functionally, part of the twin-arginine translocation (Tat) system that transports large folded proteins containing a characteristic twin-arginine motif in their signal peptide across membranes. Together with TatC, TatB is part of a receptor directly interacting with Tat signal peptides. TatB may form an oligomeric binding site that transiently accommodates folded Tat precursor proteins before their translocation. The protein is Sec-independent protein translocase protein TatB of Campylobacter fetus subsp. fetus (strain 82-40).